Consider the following 668-residue polypeptide: UvrABC system protein B (668 aa).

Residues 31–188 (HGIEAGEKAQ…RKLVNIQFER (158 aa)) form the Helicase ATP-binding domain. ATP is bound at residue 44–51 (GATGTGKT). Residues 97–120 (YYDYYQPEAYVPSSDTYIEKDSSI) carry the Beta-hairpin motif. In terms of domain architecture, Helicase C-terminal spans 435 to 601 (QMDDLVGEIN…TIIKPIRDLI (167 aa)). Residues 630 to 665 (EKLIARLEDEMRAAAKKLDFEQAASLRDTIMDMKTE) enclose the UVR domain.

Belongs to the UvrB family. As to quaternary structure, forms a heterotetramer with UvrA during the search for lesions. Interacts with UvrC in an incision complex.

It is found in the cytoplasm. The UvrABC repair system catalyzes the recognition and processing of DNA lesions. A damage recognition complex composed of 2 UvrA and 2 UvrB subunits scans DNA for abnormalities. Upon binding of the UvrA(2)B(2) complex to a putative damaged site, the DNA wraps around one UvrB monomer. DNA wrap is dependent on ATP binding by UvrB and probably causes local melting of the DNA helix, facilitating insertion of UvrB beta-hairpin between the DNA strands. Then UvrB probes one DNA strand for the presence of a lesion. If a lesion is found the UvrA subunits dissociate and the UvrB-DNA preincision complex is formed. This complex is subsequently bound by UvrC and the second UvrB is released. If no lesion is found, the DNA wraps around the other UvrB subunit that will check the other stand for damage. The chain is UvrABC system protein B from Levilactobacillus brevis (strain ATCC 367 / BCRC 12310 / CIP 105137 / JCM 1170 / LMG 11437 / NCIMB 947 / NCTC 947) (Lactobacillus brevis).